Here is a 5251-residue protein sequence, read N- to C-terminus: Dynein heavy chain-like protein 2 (5251 aa).

Kelch repeat units lie at residues 37–87 (GLFL…CYHN), 95–143 (YVII…LQNG), 266–317 (SLIL…IHGN), 318–367 (NLFI…LVES), and 372–421 (IIFI…QNNE). Residues 140 to 188 (LQNGINGTNEKGYISQTDDENCSDNKYGENQDYGSNDSDSKDGEDIDKD) are disordered. The segment at 686 to 732 (NNIEQRNNNNDNNDNNNNDNNNNNNNDNNNNNNNNNNNNNNNNDNLN) is disordered. Low complexity predominate over residues 692 to 730 (NNNNDNNDNNNNDNNNNNNNDNNNNNNNNNNNNNNNNDN). 2 coiled-coil regions span residues 1155–1225 (DNII…KKIK) and 1544–1610 (KLNN…KLIS). The segment at 1554–1598 (EKNKNANENSNEIETNKYNKKEELTNNRDGDGDDDDNIKNDKDEK) is disordered. Positions 1567–1583 (ETNKYNKKEELTNNRDG) are enriched in basic and acidic residues. A Kelch 6 repeat occupies 1639–1685 (HIKYTLKYYITNLFRLKDLFNNEKEKWIDENYLAQVFILCNTIFFVN). The interval 1802-1825 (HQEGKQEYNNKNNDNDNNNNNNNN) is disordered. The span at 1810 to 1825 (NNKNNDNDNNNNNNNN) shows a compositional bias: low complexity. 1895 to 1902 (GPAGTGKT) contributes to the ATP binding site. A coiled-coil region spans residues 2136 to 2188 (NDINENKKEKDNIEELKSDNVKEEKKTKKKHLEDNNNNKKKELFNLNNIEKEL). The interval 2152–2171 (KSDNVKEEKKTKKKHLEDNN) is disordered. 2224–2231 (GEAGCGKT) lines the ATP pocket. A Kelch 7 repeat occupies 2447 to 2494 (VIWCFGGFLGEKDNVNYKKSFDKYWKNTFKSIKVNRKISVFDFYVENN). ATP is bound by residues 2546–2553 (GKTGVGKT) and 2890–2897 (GIGGCGKT). Composition is skewed to low complexity over residues 3138–3154 (DNNN…DGNN) and 3652–3671 (DQNF…NSTN). Disordered regions lie at residues 3138-3163 (DNNN…EGND), 3652-3686 (DQNF…NHNN), 4042-4250 (EDND…EENV), 4280-4299 (NGKI…DFEN), 4773-4824 (MDFH…ENEE), and 4910-4948 (KIIK…HSGS). Residues 4059–4086 (KMEDEEKMEEEKVDEEKMEEEKVDEEKM) are compositionally biased toward acidic residues. Residues 4087–4247 (EDEKVEEKME…EKGEEQKAEE (161 aa)) show a composition bias toward basic and acidic residues. 2 stretches are compositionally biased toward acidic residues: residues 4289–4299 (DDLEEEEDFEN) and 4807–4823 (DDDD…EENE). Residues 4912 to 4937 (IKKEKPGDNKDNKYTHDQKKETIHKE) are compositionally biased toward basic and acidic residues.

It belongs to the dynein heavy chain family. As to quaternary structure, consists of at least two heavy chains and a number of intermediate and light chains.

The protein localises to the cytoplasm. It localises to the cytoskeleton. Acts as a motor for the intracellular retrograde motility of vesicles and organelles along microtubules. Dynein has ATPase activity; the force-producing power stroke is thought to occur on release of ADP. The sequence is that of Dynein heavy chain-like protein 2 from Plasmodium falciparum (isolate 3D7).